Reading from the N-terminus, the 198-residue chain is Sporulation cortex protein CoxA (198 aa).

A signal peptide spans 1-21; the sequence is MGKKMTIASLILMTAGLTACG. The tract at residues 91–115 is disordered; the sequence is PLATDGTYNNTNNRNMNRNAANNGY. A compositionally biased stretch (low complexity) spans 95–115; the sequence is DGTYNNTNNRNMNRNAANNGY.

The protein localises to the spore cortex. This is Sporulation cortex protein CoxA (coxA) from Bacillus subtilis (strain 168).